A 235-amino-acid polypeptide reads, in one-letter code: Purine nucleoside phosphorylase DeoD-type (235 aa).

Histidine 4 contacts a purine D-ribonucleoside. Residues glycine 20, arginine 24, arginine 43, and 87–90 each bind phosphate; that span reads RVGT. Residues glutamate 162, 179–181, and 203–204 contribute to the a purine D-ribonucleoside site; these read EME and SD. Aspartate 204 serves as the catalytic Proton donor.

The protein belongs to the PNP/UDP phosphorylase family. In terms of assembly, homohexamer; trimer of homodimers.

The catalysed reaction is a purine D-ribonucleoside + phosphate = a purine nucleobase + alpha-D-ribose 1-phosphate. It catalyses the reaction a purine 2'-deoxy-D-ribonucleoside + phosphate = a purine nucleobase + 2-deoxy-alpha-D-ribose 1-phosphate. Catalyzes the reversible phosphorolytic breakdown of the N-glycosidic bond in the beta-(deoxy)ribonucleoside molecules, with the formation of the corresponding free purine bases and pentose-1-phosphate. This is Purine nucleoside phosphorylase DeoD-type from Bacillus cereus (strain B4264).